Consider the following 211-residue polypeptide: Ribosomal RNA small subunit methyltransferase G (211 aa).

Residues glycine 81, leucine 86, 132–133, and arginine 147 each bind S-adenosyl-L-methionine; that span reads VE.

It belongs to the methyltransferase superfamily. RNA methyltransferase RsmG family.

It is found in the cytoplasm. It carries out the reaction guanosine(527) in 16S rRNA + S-adenosyl-L-methionine = N(7)-methylguanosine(527) in 16S rRNA + S-adenosyl-L-homocysteine. Functionally, specifically methylates the N7 position of guanine in position 527 of 16S rRNA. This chain is Ribosomal RNA small subunit methyltransferase G, found in Actinobacillus succinogenes (strain ATCC 55618 / DSM 22257 / CCUG 43843 / 130Z).